We begin with the raw amino-acid sequence, 112 residues long: UPF0212 protein Mboo_1659 (112 aa).

The protein belongs to the UPF0212 family.

This is UPF0212 protein Mboo_1659 from Methanoregula boonei (strain DSM 21154 / JCM 14090 / 6A8).